The following is a 476-amino-acid chain: uncharacterized protein (476 aa).

The stretch at 147–204 (DVRLAELRRRRAELEAEIAAVEAGDIAVLDPTAVRDRYQQLSTTARELLSDFREVEEN) forms a coiled coil.

This is an uncharacterized protein from Mycolicibacterium smegmatis (strain ATCC 700084 / mc(2)155) (Mycobacterium smegmatis).